Here is a 357-residue protein sequence, read N- to C-terminus: F-box only protein 25 (357 aa).

The segment at 1-83 (MPFLGQDWRS…NDTNTQCFYR (83 aa)) is interaction with beta-actin. Residues 225 to 273 (LTLSDLPVHMLSNILYRFSDGWDIVTLGQVTPTLSALSEDRQLWKKLCQ) form the F-box domain.

Part of a SCF (SKP1-cullin-F-box) protein ligase complex consisting of FBXO25, SKP1, CUL1 and RBX1. Interacts directly with SKP1 and CUL1. Interacts (via C-terminus) with beta-actin (via N-terminus).

It localises to the nucleus. Its pathway is protein modification; protein ubiquitination. In terms of biological role, substrate-recognition component of the SCF (SKP1-CUL1-F-box protein)-type E3 ubiquitin ligase complex. May play a role in accumulation of expanded polyglutamine (polyQ) protein huntingtin (HTT). This is F-box only protein 25 (FBXO25) from Bos taurus (Bovine).